The primary structure comprises 157 residues: Large ribosomal subunit protein uL15 (157 aa).

It belongs to the universal ribosomal protein uL15 family. Part of the 50S ribosomal subunit.

In terms of biological role, binds to the 23S rRNA. In Ehrlichia ruminantium (strain Gardel), this protein is Large ribosomal subunit protein uL15.